A 314-amino-acid chain; its full sequence is Aspartate carbamoyltransferase catalytic subunit (314 aa).

Carbamoyl phosphate contacts are provided by Arg55 and Thr56. Lys83 lines the L-aspartate pocket. 3 residues coordinate carbamoyl phosphate: Arg105, His134, and Gln137. L-aspartate-binding residues include Arg167 and Arg221. Carbamoyl phosphate is bound by residues Gly262 and Pro263.

The protein belongs to the aspartate/ornithine carbamoyltransferase superfamily. ATCase family. Heterododecamer (2C3:3R2) of six catalytic PyrB chains organized as two trimers (C3), and six regulatory PyrI chains organized as three dimers (R2).

It catalyses the reaction carbamoyl phosphate + L-aspartate = N-carbamoyl-L-aspartate + phosphate + H(+). The protein operates within pyrimidine metabolism; UMP biosynthesis via de novo pathway; (S)-dihydroorotate from bicarbonate: step 2/3. Functionally, catalyzes the condensation of carbamoyl phosphate and aspartate to form carbamoyl aspartate and inorganic phosphate, the committed step in the de novo pyrimidine nucleotide biosynthesis pathway. The sequence is that of Aspartate carbamoyltransferase catalytic subunit from Corynebacterium urealyticum (strain ATCC 43042 / DSM 7109).